A 481-amino-acid polypeptide reads, in one-letter code: Bestrophin homolog 17 (481 aa).

Residues 1-27 (MTVSYQLDVSSGNPLLFLRLLGRWRGS) lie on the Cytoplasmic side of the membrane. Residues 28-48 (IWKSVVGDLFVWLLFYYAIYF) traverse the membrane as a helical segment. Residues 49 to 95 (AYRYAFSKQLQTVFEEISIHTDDRMKYLPLTFMLGFFVTTVFERWRS) are Extracellular-facing. A helical transmembrane segment spans residues 96-116 (ALNVMPFIESVALSVAVLLPG). Residues 117 to 230 (KGREDRLTRR…AMETLIKFDA (114 aa)) lie on the Cytoplasmic side of the membrane. The chain crosses the membrane as a helical span at residues 231–251 (IPIPIAYPQVVFLAVRVYFAI). Residues 252-274 (CLVSRQFLISDMKSKTQMDWPVP) lie on the Extracellular side of the membrane. The chain crosses the membrane as a helical span at residues 275–295 (IMTVLEFIFVIGWMKVAEVLL). The Cytoplasmic portion of the chain corresponds to 296–481 (NPLGEDDDDF…SSEESVDKKG (186 aa)). A disordered region spans residues 427-481 (AGMLNKSTQPDRPTMETVSEEHEPSHFYRGDRVHSSDSGLSKTQQSSEESVDKKG). Positions 445-461 (SEEHEPSHFYRGDRVHS) are enriched in basic and acidic residues. Positions 462 to 474 (SDSGLSKTQQSSE) are enriched in polar residues.

This sequence belongs to the anion channel-forming bestrophin (TC 1.A.46) family. Calcium-sensitive chloride channel subfamily. Forms oligomers.

It localises to the cell membrane. Functionally, forms chloride channels. This chain is Bestrophin homolog 17, found in Caenorhabditis elegans.